The chain runs to 217 residues: Transcription antitermination protein NusB (217 aa).

The protein belongs to the NusB family.

In terms of biological role, involved in transcription antitermination. Required for transcription of ribosomal RNA (rRNA) genes. Binds specifically to the boxA antiterminator sequence of the ribosomal RNA (rrn) operons. This Microcystis aeruginosa (strain NIES-843 / IAM M-2473) protein is Transcription antitermination protein NusB.